Reading from the N-terminus, the 341-residue chain is Platelet-activating factor receptor (341 aa).

At Met-1 to Thr-16 the chain is on the extracellular side. An N-linked (GlcNAc...) asparagine glycan is attached at Asn-4. The chain crosses the membrane as a helical span at residues Leu-17–Trp-38. Topologically, residues Val-39–Ile-54 are cytoplasmic. Residues Phe-55–Ile-74 traverse the membrane as a helical segment. Residues Val-75–Asn-91 are Extracellular-facing. Cys-90 and Cys-173 are oxidised to a cystine. A helical transmembrane segment spans residues Val-92–Tyr-113. The Cytoplasmic portion of the chain corresponds to Asn-114–Arg-133. Residues Gly-134–Thr-155 traverse the membrane as a helical segment. At Asp-156–Ile-184 the chain is on the extracellular side. Residue Asn-169 is glycosylated (N-linked (GlcNAc...) asparagine). Residues Leu-185 to Cys-205 form a helical membrane-spanning segment. The Cytoplasmic portion of the chain corresponds to Asn-206–Met-233. The helical transmembrane segment at Val-234 to Pro-254 threads the bilayer. Over Trp-255–Gln-275 the chain is Extracellular. A helical transmembrane segment spans residues Ile-276–Leu-295. Topologically, residues Thr-296 to Asn-341 are cytoplasmic.

The protein belongs to the G-protein coupled receptor 1 family. As to quaternary structure, interacts with ARRB1. As to expression, found in a range of organs. Expressed most strongly in spleen, followed by skeletal muscle, lung and small intestine. Expressed at moderate levels in the heart. Expressed at relatively low levels in the brain, liver and kidney.

Its subcellular location is the cell membrane. Receptor for platelet activating factor, a chemotactic phospholipid mediator that possesses potent inflammatory, smooth-muscle contractile and hypotensive activity. Seems to mediate its action via a G protein that activates a phosphatidylinositol-calcium second messenger system. The chain is Platelet-activating factor receptor (Ptafr) from Mus musculus (Mouse).